Consider the following 290-residue polypeptide: uncharacterized protein (290 aa).

The next 7 helical transmembrane spans lie at 40 to 60, 80 to 100, 110 to 130, 139 to 159, 166 to 188, 200 to 220, and 238 to 260; these read MHVILLSALFYQIINILSPVI, DAHVVSSVQSIVLICLGYTCL, LFGYSVVAGDIYALTAGYFVW, VHITGIGFVIHAIAALFVITF, MYYGPTYLSWELSTPFLNIHYFL, MINGFILIVTFICVRIAWGWF, and WALSLFYLAANMSLNCLNLFWVS. In terms of domain architecture, TLC spans 74-271; the sequence is KTRLNWDAHV…MIDAIRRRAH (198 aa).

Its subcellular location is the endoplasmic reticulum membrane. This is an uncharacterized protein from Schizosaccharomyces pombe (strain 972 / ATCC 24843) (Fission yeast).